The chain runs to 79 residues: Small ribosomal subunit protein bS18 (79 aa).

Belongs to the bacterial ribosomal protein bS18 family. Part of the 30S ribosomal subunit. Forms a tight heterodimer with protein bS6.

Binds as a heterodimer with protein bS6 to the central domain of the 16S rRNA, where it helps stabilize the platform of the 30S subunit. This chain is Small ribosomal subunit protein bS18, found in Streptococcus pyogenes serotype M49 (strain NZ131).